A 378-amino-acid polypeptide reads, in one-letter code: 3-dehydroquinate synthase (378 aa).

NAD(+)-binding positions include 115 to 119, 139 to 140, lysine 152, and lysine 161; these read GVVGD and TS. Glutamate 194, histidine 256, and histidine 275 together coordinate Zn(2+).

This sequence belongs to the sugar phosphate cyclases superfamily. Dehydroquinate synthase family. Requires Co(2+) as cofactor. It depends on Zn(2+) as a cofactor. NAD(+) is required as a cofactor.

The protein localises to the cytoplasm. It catalyses the reaction 7-phospho-2-dehydro-3-deoxy-D-arabino-heptonate = 3-dehydroquinate + phosphate. Its pathway is metabolic intermediate biosynthesis; chorismate biosynthesis; chorismate from D-erythrose 4-phosphate and phosphoenolpyruvate: step 2/7. In terms of biological role, catalyzes the conversion of 3-deoxy-D-arabino-heptulosonate 7-phosphate (DAHP) to dehydroquinate (DHQ). In Brucella abortus biovar 1 (strain 9-941), this protein is 3-dehydroquinate synthase.